Here is a 361-residue protein sequence, read N- to C-terminus: Phospho-N-acetylmuramoyl-pentapeptide-transferase (361 aa).

Helical transmembrane passes span 27 to 47, 72 to 92, 94 to 114, 133 to 153, 169 to 189, 200 to 220, 240 to 260, 264 to 284, 289 to 309, and 338 to 358; these read GAMV…IDHL, TPTM…LLWA, LHNP…FVGF, LRLA…IWAG, FAIN…VGAG, GLAI…AYLV, LAVL…FNAP, IFMG…IAVA, IVLA…IVQV, and QIVI…LSTL.

Belongs to the glycosyltransferase 4 family. MraY subfamily. Mg(2+) serves as cofactor.

Its subcellular location is the cell inner membrane. The catalysed reaction is UDP-N-acetyl-alpha-D-muramoyl-L-alanyl-gamma-D-glutamyl-meso-2,6-diaminopimeloyl-D-alanyl-D-alanine + di-trans,octa-cis-undecaprenyl phosphate = di-trans,octa-cis-undecaprenyl diphospho-N-acetyl-alpha-D-muramoyl-L-alanyl-D-glutamyl-meso-2,6-diaminopimeloyl-D-alanyl-D-alanine + UMP. It participates in cell wall biogenesis; peptidoglycan biosynthesis. Its function is as follows. Catalyzes the initial step of the lipid cycle reactions in the biosynthesis of the cell wall peptidoglycan: transfers peptidoglycan precursor phospho-MurNAc-pentapeptide from UDP-MurNAc-pentapeptide onto the lipid carrier undecaprenyl phosphate, yielding undecaprenyl-pyrophosphoryl-MurNAc-pentapeptide, known as lipid I. The sequence is that of Phospho-N-acetylmuramoyl-pentapeptide-transferase from Afipia carboxidovorans (strain ATCC 49405 / DSM 1227 / KCTC 32145 / OM5) (Oligotropha carboxidovorans).